The sequence spans 324 residues: Lactonase drp35 (324 aa).

Ca(2+)-binding residues include E47, S109, G111, D129, T132, Y134, D137, N184, D235, and S236. D235 serves as the catalytic Proton donor.

Belongs to the SMP-30/CGR1 family. Requires Ca(2+) as cofactor.

The protein localises to the cytoplasm. In terms of biological role, exhibits lactonase activity. Acts in cells with perturbed membrane integrity and is possibly related to the membrane homeostasis. The protein is Lactonase drp35 (drp35) of Staphylococcus saprophyticus subsp. saprophyticus (strain ATCC 15305 / DSM 20229 / NCIMB 8711 / NCTC 7292 / S-41).